The chain runs to 331 residues: 6-phosphogluconolactonase (331 aa).

This sequence belongs to the cycloisomerase 2 family.

It catalyses the reaction 6-phospho-D-glucono-1,5-lactone + H2O = 6-phospho-D-gluconate + H(+). Its pathway is carbohydrate degradation; pentose phosphate pathway; D-ribulose 5-phosphate from D-glucose 6-phosphate (oxidative stage): step 2/3. Functionally, catalyzes the hydrolysis of 6-phosphogluconolactone to 6-phosphogluconate. This chain is 6-phosphogluconolactonase, found in Enterobacter sp. (strain 638).